A 470-amino-acid polypeptide reads, in one-letter code: Ubiquitin carboxyl-terminal hydrolase calypso (470 aa).

The region spanning 43–274 (GWLELESDPG…IRFNLMAVVP (232 aa)) is the UCH catalytic domain. Cys129 acts as the Nucleophile in catalysis. The Proton donor role is filled by His211. Positions 305–324 (DEQGEGGNGDPQRPDTPSTL) are disordered. A ULD domain is found at 373–401 (NYDKFICTFLSMLAHQGVLGELVSQHLLP). The segment at 403–470 (KKISGQSAAN…KGRNKCKKRK (68 aa)) is positively charged C-terminal tail required for binding nucleosomes. The segment covering 422–451 (ANAGATAAGAAGAAPKSQQQQAAAAKNGKS) has biased composition (low complexity). Positions 422–470 (ANAGATAAGAAGAAPKSQQQQAAAAKNGKSPSKTPGRRRKGRNKCKKRK) are disordered. A compositionally biased stretch (basic residues) spans 456–470 (PGRRRKGRNKCKKRK).

Belongs to the peptidase C12 family. BAP1 subfamily. As to quaternary structure, catalytic component of the polycomb repressive deubiquitinase (PR-DUB) complex, at least composed of caly/calypso, Asx and sba (MBD5/6 homolog). The PR-DUB complex associates with nucleosomes to mediate deubiquitination of histone H2AK118ub1 substrates; the association requires the positively charged C-terminal tail of caly, probably due to direct binding of DNA. Interacts (via ULD domain) with Asx (via DEUBAD domain); the interaction produces a stable heterodimer with a composite binding site for ubiquitin. Homodimerizes (via coiled-coil hinge-region between the UCH and ULD domains) to mediate assembly of 2 copies of the caly-Asx heterodimer into a bisymmetric tetramer; dimerization enhances PR-DUB association with nucleosomes.

It is found in the nucleus. The catalysed reaction is Thiol-dependent hydrolysis of ester, thioester, amide, peptide and isopeptide bonds formed by the C-terminal Gly of ubiquitin (a 76-residue protein attached to proteins as an intracellular targeting signal).. Catalytic component of the polycomb repressive deubiquitinase (PR-DUB) complex, a complex that specifically mediates deubiquitination of histone H2A monoubiquitinated at 'Lys-119' (H2AK118ub1). Mediates bisymmetric organization of the PR-DUB complex and is involved in association with nucleosomes to mediate deubiquitination. Does not deubiquitinate monoubiquitinated histone H2B. Required to maintain the transcriptionally repressive state of homeotic genes throughout development. The PR-DUB complex has weak or no activity toward 'Lys-48'- and 'Lys-63'-linked polyubiquitin chains. Polycomb group (PcG) protein. The chain is Ubiquitin carboxyl-terminal hydrolase calypso from Drosophila ananassae (Fruit fly).